Consider the following 623-residue polypeptide: Endoglucanase 7 (623 aa).

The Cytoplasmic portion of the chain corresponds to 1-79; the sequence is MHPGNVWGGS…LGCVSVSRTV (79 aa). The helical; Signal-anchor for type II membrane protein transmembrane segment at 80–100 threads the bilayer; that stretch reads FLWTVGSIAVLFLVVALPIII. The Extracellular segment spans residues 101–623; sequence VKSLPRHKSA…TPPPPKAWKP (523 aa). N-linked (GlcNAc...) asparagine glycans are attached at residues Asn116, Asn221, Asn328, Asn349, Asn412, Asn429, and Asn464. His517 is an active-site residue. Asn548 carries an N-linked (GlcNAc...) asparagine glycan. Residue Asp565 is part of the active site. An N-linked (GlcNAc...) asparagine glycan is attached at Asn571. Glu574 is an active-site residue.

This sequence belongs to the glycosyl hydrolase 9 (cellulase E) family. Expressed in basal region of leaf blade and proximal parts of leaf and floral organ.

It is found in the membrane. The enzyme catalyses Endohydrolysis of (1-&gt;4)-beta-D-glucosidic linkages in cellulose, lichenin and cereal beta-D-glucans.. This chain is Endoglucanase 7 (KOR2), found in Arabidopsis thaliana (Mouse-ear cress).